The primary structure comprises 962 residues: UvrABC system protein A (962 aa).

Residue 38 to 45 (GISGSGKS) participates in ATP binding. ABC transporter domains follow at residues 319 to 597 (WSKS…PDSL) and 617 to 944 (PSGR…RFLR). Position 649–656 (649–656 (GVSGSGKS)) interacts with ATP. The C4-type zinc-finger motif lies at 748 to 774 (CEACGGDGIIKIEMHFLADVYVPCEVC).

Belongs to the ABC transporter superfamily. UvrA family. In terms of assembly, forms a heterotetramer with UvrB during the search for lesions.

Its subcellular location is the cytoplasm. Functionally, the UvrABC repair system catalyzes the recognition and processing of DNA lesions. UvrA is an ATPase and a DNA-binding protein. A damage recognition complex composed of 2 UvrA and 2 UvrB subunits scans DNA for abnormalities. When the presence of a lesion has been verified by UvrB, the UvrA molecules dissociate. In Methanothermobacter thermautotrophicus (strain ATCC 29096 / DSM 1053 / JCM 10044 / NBRC 100330 / Delta H) (Methanobacterium thermoautotrophicum), this protein is UvrABC system protein A.